The chain runs to 293 residues: Diaminopimelate epimerase (293 aa).

Residues N17, Q47, and N67 each contribute to the substrate site. Catalysis depends on C76, which acts as the Proton donor. Residues 77-78 (GN), N164, N197, and 215-216 (ER) contribute to the substrate site. The Proton acceptor role is filled by C224. 225-226 (GS) is a substrate binding site.

Belongs to the diaminopimelate epimerase family. As to quaternary structure, homodimer.

The protein localises to the cytoplasm. It carries out the reaction (2S,6S)-2,6-diaminopimelate = meso-2,6-diaminopimelate. It functions in the pathway amino-acid biosynthesis; L-lysine biosynthesis via DAP pathway; DL-2,6-diaminopimelate from LL-2,6-diaminopimelate: step 1/1. Catalyzes the stereoinversion of LL-2,6-diaminopimelate (L,L-DAP) to meso-diaminopimelate (meso-DAP), a precursor of L-lysine and an essential component of the bacterial peptidoglycan. The protein is Diaminopimelate epimerase of Rhodopseudomonas palustris (strain BisB5).